A 245-amino-acid chain; its full sequence is tRNA1(Val) (adenine(37)-N6)-methyltransferase (245 aa).

It belongs to the methyltransferase superfamily. tRNA (adenine-N(6)-)-methyltransferase family.

The protein resides in the cytoplasm. It carries out the reaction adenosine(37) in tRNA1(Val) + S-adenosyl-L-methionine = N(6)-methyladenosine(37) in tRNA1(Val) + S-adenosyl-L-homocysteine + H(+). Specifically methylates the adenine in position 37 of tRNA(1)(Val) (anticodon cmo5UAC). The sequence is that of tRNA1(Val) (adenine(37)-N6)-methyltransferase from Cronobacter sakazakii (strain ATCC BAA-894) (Enterobacter sakazakii).